The following is a 261-amino-acid chain: Carnitinyl-CoA dehydratase (261 aa).

Catalysis depends on glutamate 111, which acts as the Nucleophile. Glutamate 131 serves as the catalytic Proton acceptor.

The protein belongs to the enoyl-CoA hydratase/isomerase family.

The catalysed reaction is (R)-carnitinyl-CoA = crotonobetainyl-CoA + H2O. The protein operates within amine and polyamine metabolism; carnitine metabolism. Catalyzes the reversible dehydration of L-carnitinyl-CoA to crotonobetainyl-CoA. The polypeptide is Carnitinyl-CoA dehydratase (Escherichia coli (strain SMS-3-5 / SECEC)).